We begin with the raw amino-acid sequence, 141 residues long: Putative antiporter subunit mnhB2 (141 aa).

Transmembrane regions (helical) follow at residues 10–30 (TVTK…FFAG), 35–55 (GGGF…FLAF), 70–90 (KLMI…VFFG), and 116–136 (LFEL…MLAL).

The protein belongs to the CPA3 antiporters (TC 2.A.63) subunit B family. As to quaternary structure, may form a heterooligomeric complex that consists of seven subunits: mnhA2, mnhB2, mnhC2, mnhD2, mnhE2, mnhF2 and mnhG2.

The protein resides in the cell membrane. The sequence is that of Putative antiporter subunit mnhB2 (mnhB2) from Staphylococcus haemolyticus (strain JCSC1435).